The following is a 720-amino-acid chain: Transcription factor bHLH155 (720 aa).

Residues 522–534 (YPSSSSDQFQTSL) show a composition bias toward polar residues. The disordered stretch occupies residues 522–558 (YPSSSSDQFQTSLDIPKKNKKRAKPGESSRPRPRDRQ). Positions 540 to 547 (NKKRAKPG) match the Nuclear localization signal motif. In terms of domain architecture, bHLH spans 544-593 (AKPGESSRPRPRDRQLIQDRIKELRELVPNGSKCSIDSLLERTIKHMLFL). The span at 545-558 (KPGESSRPRPRDRQ) shows a compositional bias: basic and acidic residues.

This sequence belongs to the bHLH protein family. LHW subfamily. Homodimer.

It localises to the nucleus. Transcription factor that may regulate root development. This is Transcription factor bHLH155 (BHLH155) from Arabidopsis thaliana (Mouse-ear cress).